Reading from the N-terminus, the 326-residue chain is Vitamin B12 import system permease protein BtuC (326 aa).

A run of 9 helical transmembrane segments spans residues 15-35 (WLLS…CAGE), 61-81 (LAVL…QALF), 88-108 (PGLL…VLLG), 112-132 (LPGW…TLIL), 146-166 (LLAG…AIYF), 184-204 (GGVD…LIWI), 240-260 (GWMV…GLVI), 274-294 (VLLP…DVVA), and 302-322 (ELPI…WLLL).

The protein belongs to the binding-protein-dependent transport system permease family. FecCD subfamily. As to quaternary structure, the complex is composed of two ATP-binding proteins (BtuD), two transmembrane proteins (BtuC) and a solute-binding protein (BtuF).

It is found in the cell inner membrane. Functionally, part of the ABC transporter complex BtuCDF involved in vitamin B12 import. Involved in the translocation of the substrate across the membrane. The polypeptide is Vitamin B12 import system permease protein BtuC (Salmonella enteritidis PT4 (strain P125109)).